Reading from the N-terminus, the 703-residue chain is Protein O-mannosyl-transferase TMEM260 (703 aa).

The next 8 membrane-spanning stretches (helical) occupy residues 20–40, 68–88, 90–110, 137–157, 182–202, 218–238, 314–334, and 352–372; these read GALR…TLTL, PLFT…SVAY, VNLL…YTVF, IAAE…ALTV, SLCN…WILF, LTLA…SSYL, KSSV…FFAW, and FWLQ…ATLV. N-linked (GlcNAc...) asparagine glycans are attached at residues Asn-403 and Asn-564.

This sequence belongs to the glycosyltransferase 117 (GT117) family.

The protein resides in the endoplasmic reticulum membrane. It carries out the reaction a di-trans,poly-cis-dolichyl beta-D-mannosyl phosphate + L-seryl-[protein] = 3-O-(alpha-D-mannosyl)-L-seryl-[protein] + a di-trans,poly-cis-dolichyl phosphate + H(+). The enzyme catalyses a di-trans,poly-cis-dolichyl beta-D-mannosyl phosphate + L-threonyl-[protein] = 3-O-(alpha-D-mannosyl)-L-threonyl-[protein] + a di-trans,poly-cis-dolichyl phosphate + H(+). Its function is as follows. O-mannosyl-transferase that transfers mannosyl residues to the hydroxyl group of serine or threonine residues of proteins. Specifically glycosylates the IPT/TIG domain of target proteins, such as MET and MST1R/RON. TMEM260-mediated O-mannosylated residues are composed of single mannose glycans that are not elongated or modified. In Mus musculus (Mouse), this protein is Protein O-mannosyl-transferase TMEM260.